We begin with the raw amino-acid sequence, 287 residues long: Nucleotide-binding protein Ajs_0902 (287 aa).

Residue 10–17 (GMSGSGKS) coordinates ATP. 59 to 62 (DVRS) provides a ligand contact to GTP.

The protein belongs to the RapZ-like family.

Functionally, displays ATPase and GTPase activities. The sequence is that of Nucleotide-binding protein Ajs_0902 from Acidovorax sp. (strain JS42).